A 221-amino-acid chain; its full sequence is UPF0758 protein YicR (221 aa).

In terms of domain architecture, MPN spans 99–221 (ALLSPEMTLE…YVSFAERGWI (123 aa)). The Zn(2+) site is built by histidine 170, histidine 172, and aspartate 183. Residues 170–183 (HNHPSGCAEPSKAD) carry the JAMM motif motif.

This sequence belongs to the UPF0758 family. YicR subfamily.

The chain is UPF0758 protein YicR from Salmonella arizonae (strain ATCC BAA-731 / CDC346-86 / RSK2980).